A 527-amino-acid polypeptide reads, in one-letter code: Methane monooxygenase component A alpha chain (527 aa).

Glu-114, Glu-144, and His-147 together coordinate Fe cation. The active site involves Cys-151. Residues Glu-209, Glu-243, and His-246 each contribute to the Fe cation site.

Belongs to the TmoA/XamoA family. M.capsulatus has two forms of methane monooxygenase, a soluble and a membrane-bound type. The soluble type consists of four components (A to D): protein A, comprising three chains, in an alpha-2, beta-2, gamma-2 configuration, is a nonheme iron protein containing an unusual mu-hydroxo bridge structure at its active site and interacts with both oxygen and methane. Fe cation is required as a cofactor.

The catalysed reaction is methane + NADH + O2 + H(+) = methanol + NAD(+) + H2O. It carries out the reaction methane + NADPH + O2 + H(+) = methanol + NADP(+) + H2O. Its function is as follows. Responsible for the initial oxygenation of methane to methanol in methanotrophs. It also catalyzes the monohydroxylation of a variety of unactivated alkenes, alicyclic, aromatic and heterocyclic compounds. This chain is Methane monooxygenase component A alpha chain (mmoX), found in Methylococcus capsulatus (strain ATCC 33009 / NCIMB 11132 / Bath).